Reading from the N-terminus, the 55-residue chain is MAKGVREKIKLVSSAGTGHFYTTTKNKRTKPEKLELKKFDPVVRQHVIYKEAKIK.

The protein belongs to the bacterial ribosomal protein bL33 family.

The sequence is that of Large ribosomal subunit protein bL33 from Yersinia enterocolitica serotype O:8 / biotype 1B (strain NCTC 13174 / 8081).